A 216-amino-acid chain; its full sequence is Large ribosomal subunit protein uL24m (216 aa).

The transit peptide at 1–9 (MRLTALLSM) directs the protein to the mitochondrion. The KOW domain maps to 56-89 (VVRGDTVEVLSGKEKGKQGKVAQVIRARNWVILE). The interval 167-186 (PQQWKDGPKDTSPEDTLQKT) is disordered.

It belongs to the universal ribosomal protein uL24 family. As to quaternary structure, component of the mitochondrial ribosome large subunit (39S) which comprises a 16S rRNA and about 50 distinct proteins.

It is found in the mitochondrion. The sequence is that of Large ribosomal subunit protein uL24m (mrpl24) from Danio rerio (Zebrafish).